The sequence spans 513 residues: Exoglucanase 1 (513 aa).

A signal peptide spans 1 to 17; the sequence is MYRKLAVISAFLATARA. Glutamine 18 is modified (pyrrolidone carboxylic acid). A catalytic region spans residues 18–453; it reads QSACTLQSET…GSTGNPSGGN (436 aa). 10 disulfides stabilise this stretch: cysteine 21/cysteine 89, cysteine 36/cysteine 42, cysteine 67/cysteine 88, cysteine 78/cysteine 84, cysteine 155/cysteine 414, cysteine 189/cysteine 227, cysteine 193/cysteine 226, cysteine 247/cysteine 273, cysteine 255/cysteine 260, and cysteine 278/cysteine 348. An N-linked (GlcNAc) asparagine glycan is attached at asparagine 62. The Nucleophile role is filled by glutamate 229. Residue glutamate 234 is the Proton donor/acceptor of the active site. N-linked (GlcNAc) asparagine glycosylation is found at asparagine 287 and asparagine 401. Over residues 401–437 the composition is skewed to polar residues; the sequence is NETSSTPGAVRGSCSTSSGVPAQVESQSPNAKVTFSN. A disordered region spans residues 401–480; that stretch reads NETSSTPGAV…TGSSPGPTQS (80 aa). Residues 449–459 show a composition bias toward gly residues; it reads PSGGNPPGGNR. The segment at 454–477 is linker; that stretch reads PPGGNRGTTTTRRPATTTGSSPGP. The span at 460–478 shows a compositional bias: low complexity; that stretch reads GTTTTRRPATTTGSSPGPT. Threonine 461 carries an O-linked (Man) threonine glycan. O-linked (Man...) threonine glycans are attached at residues threonine 462, threonine 463, and threonine 464. An O-linked (Man) threonine glycan is attached at threonine 469. O-linked (Man...) threonine glycans are attached at residues threonine 470 and threonine 471. Residues serine 473 and serine 474 are each glycosylated (O-linked (Man) serine). The region spanning 477–513 is the CBM1 domain; the sequence is PTQSHYGQCGGIGYSGPTVCASGTTCQVLNPYYSQCL. An O-linked (Man) threonine glycan is attached at threonine 478. O-linked (Man) serine glycosylation is found at serine 480 and serine 491. Intrachain disulfides connect cysteine 485–cysteine 502 and cysteine 496–cysteine 512.

This sequence belongs to the glycosyl hydrolase 7 (cellulase C) family. In terms of processing, N-glycosylated. The catalytic core domain comprises three N-linked glycans which each consist of a single N-acetylglucosamine residue. Post-translationally, O-glycosylated. Within the linker domain, all 8 threonines are variably glycosylated with between at least one, and up to three, mannose residues per site. All serines in this domain are at least partially glycosylated with a single mannose residue. O-glycosylation of the cellulase linker provides protection from proteolysis. Linker glycans also contribute to binding affinity of cellobiohydrolases to cellulose.

It localises to the secreted. It catalyses the reaction Hydrolysis of (1-&gt;4)-beta-D-glucosidic linkages in cellulose and cellotetraose, releasing cellobiose from the non-reducing ends of the chains.. Functionally, exocellobiohydrolases (CBH) that catalyzes the hydrolysis of 1,4-beta-D-glucosidic bonds in cellulose to release the disaccharide cellobiose. The degradation of cellulose involves an interplay between different cellulolytic enzymes. Hydrolysis starts with endoglucanases (EGs), which cut internal beta-1,4-glucosidic bonds in cellulose to reduce the polymerization degree of the substrate and create new chain ends for exocellobiohydrolases (CBHs). The CBHs release the disaccharide cellobiose from the non-reducing end of the cellulose polymer chain. Finally, beta-1,4-glucosidases hydrolyze the cellobiose and other short cello-oligosaccharides into glucose units. The chain is Exoglucanase 1 (cbh1) from Hypocrea jecorina (Trichoderma reesei).